The primary structure comprises 163 residues: Neurotrophin-3 (163 aa).

An N-terminal signal peptide occupies residues 1-3 (IQS). A propeptide spanning residues 4 to 119 (TSMDQGILTE…VLNRTSRRKR (116 aa)) is cleaved from the precursor. Asparagine 112 carries N-linked (GlcNAc...) asparagine glycosylation. Positions 114–133 (TSRRKREGKSHRGEYSVCDS) are disordered. Positions 123-133 (SHRGEYSVCDS) are enriched in basic and acidic residues.

It belongs to the NGF-beta family.

Its subcellular location is the secreted. Functionally, seems to promote the survival of visceral and proprioceptive sensory neurons. The polypeptide is Neurotrophin-3 (NTF3) (Lichanura trivirgata (Rosy boa)).